Consider the following 262-residue polypeptide: MLIIPAVDLRGGRCVRLFQGRADQETVYSTDPVAVARTWEEQGARRLHVVDLDGAFTGKPQNSGVVLDIVKSVNIPVQVGGGIRNPENVKCYLEHGVDRVILGTAALTNPEFLDAVVAAYGERIVVGVDCRDGRVCVQGWEQTAATDVLPFLEELVRRGVRRVVFTDVKRDGTLEGPNLEEIARVAAHTELKVIASGGVSRLEDLRALKKLEHLGVDSVIIGKALYAGTITLAEALALERKEKDNVGQEDHSLPRCEPGPRG.

Asp8 (proton acceptor) is an active-site residue. The Proton donor role is filled by Asp129. Residues 243–262 (KDNVGQEDHSLPRCEPGPRG) form a disordered region.

It belongs to the HisA/HisF family.

The protein resides in the cytoplasm. It catalyses the reaction 1-(5-phospho-beta-D-ribosyl)-5-[(5-phospho-beta-D-ribosylamino)methylideneamino]imidazole-4-carboxamide = 5-[(5-phospho-1-deoxy-D-ribulos-1-ylimino)methylamino]-1-(5-phospho-beta-D-ribosyl)imidazole-4-carboxamide. It participates in amino-acid biosynthesis; L-histidine biosynthesis; L-histidine from 5-phospho-alpha-D-ribose 1-diphosphate: step 4/9. The polypeptide is 1-(5-phosphoribosyl)-5-[(5-phosphoribosylamino)methylideneamino] imidazole-4-carboxamide isomerase (Desulforudis audaxviator (strain MP104C)).